Here is a 48-residue protein sequence, read N- to C-terminus: Fimbrial assembly protein, serogroup A1 (48 aa).

This chain is Fimbrial assembly protein, serogroup A1 (fimB), found in Dichelobacter nodosus (Bacteroides nodosus).